A 244-amino-acid chain; its full sequence is Orotidine 5'-phosphate decarboxylase (244 aa).

Substrate-binding positions include Asp-14, Lys-36, 63-72 (DLKFHDIPNT), Thr-127, Arg-188, Gln-197, Gly-217, and Arg-218. The Proton donor role is filled by Lys-65.

The protein belongs to the OMP decarboxylase family. Type 1 subfamily. Homodimer.

It carries out the reaction orotidine 5'-phosphate + H(+) = UMP + CO2. The protein operates within pyrimidine metabolism; UMP biosynthesis via de novo pathway; UMP from orotate: step 2/2. Catalyzes the decarboxylation of orotidine 5'-monophosphate (OMP) to uridine 5'-monophosphate (UMP). The sequence is that of Orotidine 5'-phosphate decarboxylase from Syntrophotalea carbinolica (strain DSM 2380 / NBRC 103641 / GraBd1) (Pelobacter carbinolicus).